We begin with the raw amino-acid sequence, 251 residues long: GTP cyclohydrolase 1 type 2 homolog (251 aa).

A divalent metal cation is bound by residues His64, His65, Asp102, His219, and Glu223.

It belongs to the GTP cyclohydrolase I type 2/NIF3 family. In terms of assembly, homohexamer.

The protein is GTP cyclohydrolase 1 type 2 homolog of Chlamydia muridarum (strain MoPn / Nigg).